The chain runs to 961 residues: Alanine--tRNA ligase, chloroplastic/mitochondrial (961 aa).

Residues H641, H645, C743, and H747 each coordinate Zn(2+).

Belongs to the class-II aminoacyl-tRNA synthetase family. In terms of assembly, monomer. Zn(2+) is required as a cofactor.

The protein localises to the plastid. It localises to the chloroplast. The protein resides in the mitochondrion. It carries out the reaction tRNA(Ala) + L-alanine + ATP = L-alanyl-tRNA(Ala) + AMP + diphosphate. In terms of biological role, catalyzes the attachment of alanine to tRNA(Ala) in a two-step reaction: alanine is first activated by ATP to form Ala-AMP and then transferred to the acceptor end of tRNA(Ala). Also edits incorrectly charged tRNA(Ala) via its editing domain. The protein is Alanine--tRNA ligase, chloroplastic/mitochondrial of Sorghum bicolor (Sorghum).